Here is a 160-residue protein sequence, read N- to C-terminus: Ureidoglycolate lyase (160 aa).

It belongs to the ureidoglycolate lyase family. As to quaternary structure, homodimer. Requires Ni(2+) as cofactor.

The enzyme catalyses (S)-ureidoglycolate = urea + glyoxylate. It participates in nitrogen metabolism; (S)-allantoin degradation. In terms of biological role, catalyzes the catabolism of the allantoin degradation intermediate (S)-ureidoglycolate, generating urea and glyoxylate. Involved in the anaerobic utilization of allantoin as sole nitrogen source. Reinforces the induction of genes involved in the degradation of allantoin and glyoxylate by producing glyoxylate. The chain is Ureidoglycolate lyase from Escherichia coli (strain SMS-3-5 / SECEC).